The following is a 670-amino-acid chain: UvrABC system protein B (670 aa).

The Helicase ATP-binding domain maps to 26–183 (EGLEDGLAHQ…RRLAELQYSR (158 aa)). 39 to 46 (GVTGSGKT) is a binding site for ATP. The Beta-hairpin signature appears at 92–115 (YYDYYQPEAYVPSSDTFIEKDASV). Residues 431-597 (QVDDLLSEIR…GLNKKISDIL (167 aa)) enclose the Helicase C-terminal domain. The UVR domain maps to 630 to 665 (ELKIRELESKMLTHAQNLEFEEAAALRDELQALRAQ).

Belongs to the UvrB family. As to quaternary structure, forms a heterotetramer with UvrA during the search for lesions. Interacts with UvrC in an incision complex.

The protein resides in the cytoplasm. Its function is as follows. The UvrABC repair system catalyzes the recognition and processing of DNA lesions. A damage recognition complex composed of 2 UvrA and 2 UvrB subunits scans DNA for abnormalities. Upon binding of the UvrA(2)B(2) complex to a putative damaged site, the DNA wraps around one UvrB monomer. DNA wrap is dependent on ATP binding by UvrB and probably causes local melting of the DNA helix, facilitating insertion of UvrB beta-hairpin between the DNA strands. Then UvrB probes one DNA strand for the presence of a lesion. If a lesion is found the UvrA subunits dissociate and the UvrB-DNA preincision complex is formed. This complex is subsequently bound by UvrC and the second UvrB is released. If no lesion is found, the DNA wraps around the other UvrB subunit that will check the other stand for damage. This Pectobacterium carotovorum subsp. carotovorum (strain PC1) protein is UvrABC system protein B.